The following is a 391-amino-acid chain: NADH-quinone oxidoreductase subunit D (391 aa).

Belongs to the complex I 49 kDa subunit family. As to quaternary structure, NDH-1 is composed of 14 different subunits. Subunits NuoB, C, D, E, F, and G constitute the peripheral sector of the complex.

It localises to the cell inner membrane. It carries out the reaction a quinone + NADH + 5 H(+)(in) = a quinol + NAD(+) + 4 H(+)(out). Functionally, NDH-1 shuttles electrons from NADH, via FMN and iron-sulfur (Fe-S) centers, to quinones in the respiratory chain. The immediate electron acceptor for the enzyme in this species is believed to be ubiquinone. Couples the redox reaction to proton translocation (for every two electrons transferred, four hydrogen ions are translocated across the cytoplasmic membrane), and thus conserves the redox energy in a proton gradient. The sequence is that of NADH-quinone oxidoreductase subunit D from Rickettsia massiliae (strain Mtu5).